The following is a 158-amino-acid chain: MEMQDQSKINLGIVVSEFNYDITSLMLQRALSHAEFLGVTVKVVVKVPGSYDMAVIVKELLKRDEIDGVVTLGAVIKGETKHDEIVATQTARKLMDLSVEYGKPVTLGIIGHGVTHEQAVERIEEYSMRAVESAVKLIKRLKKLREIDLTKETNVSIE.

5-amino-6-(D-ribitylamino)uracil is bound by residues phenylalanine 18, 50 to 52 (SYD), and 74 to 76 (AVI). 79 to 80 (ET) is a binding site for (2S)-2-hydroxy-3-oxobutyl phosphate. Histidine 82 acts as the Proton donor in catalysis. Residue leucine 107 coordinates 5-amino-6-(D-ribitylamino)uracil. Arginine 122 serves as a coordination point for (2S)-2-hydroxy-3-oxobutyl phosphate.

The protein belongs to the DMRL synthase family.

The catalysed reaction is (2S)-2-hydroxy-3-oxobutyl phosphate + 5-amino-6-(D-ribitylamino)uracil = 6,7-dimethyl-8-(1-D-ribityl)lumazine + phosphate + 2 H2O + H(+). It participates in cofactor biosynthesis; riboflavin biosynthesis; riboflavin from 2-hydroxy-3-oxobutyl phosphate and 5-amino-6-(D-ribitylamino)uracil: step 1/2. Functionally, catalyzes the formation of 6,7-dimethyl-8-ribityllumazine by condensation of 5-amino-6-(D-ribitylamino)uracil with 3,4-dihydroxy-2-butanone 4-phosphate. This is the penultimate step in the biosynthesis of riboflavin. This Sulfolobus acidocaldarius (strain ATCC 33909 / DSM 639 / JCM 8929 / NBRC 15157 / NCIMB 11770) protein is 6,7-dimethyl-8-ribityllumazine synthase.